We begin with the raw amino-acid sequence, 393 residues long: Chorismate synthase (393 aa).

NADP(+) is bound by residues Arg40 and Arg46. FMN-binding positions include 129 to 131 (RAS), 250 to 251 (QA), Gly301, 316 to 320 (KPIST), and Arg342.

The protein belongs to the chorismate synthase family. Homotetramer. FMNH2 serves as cofactor.

The enzyme catalyses 5-O-(1-carboxyvinyl)-3-phosphoshikimate = chorismate + phosphate. Its pathway is metabolic intermediate biosynthesis; chorismate biosynthesis; chorismate from D-erythrose 4-phosphate and phosphoenolpyruvate: step 7/7. In terms of biological role, catalyzes the anti-1,4-elimination of the C-3 phosphate and the C-6 proR hydrogen from 5-enolpyruvylshikimate-3-phosphate (EPSP) to yield chorismate, which is the branch point compound that serves as the starting substrate for the three terminal pathways of aromatic amino acid biosynthesis. This reaction introduces a second double bond into the aromatic ring system. This is Chorismate synthase from Acidobacterium capsulatum (strain ATCC 51196 / DSM 11244 / BCRC 80197 / JCM 7670 / NBRC 15755 / NCIMB 13165 / 161).